Reading from the N-terminus, the 251-residue chain is POU class 2 homeobox associating factor 3 (251 aa).

The region spanning 5–27 (PKVYQGVRVKITVKELLQQRRAH) is the OCA domain. The disordered stretch occupies residues 24–45 (RRAHQAASGGTRSGGSSVHLSD). A compositionally biased stretch (low complexity) spans 31 to 40 (SGGTRSGGSS).

The protein belongs to the POU2AF family. As to quaternary structure, interacts with POU2F3 in a DNA-dependent manner; this interaction increases POU2F3 transactivation activity. As to expression, expressed in many cell types of epithelial, mesenchymal and hematopoietic origins. Expressed in tufs cells.

The protein resides in the cytoplasm. It localises to the nucleus. In terms of biological role, transcriptional coactivator that specifically associates with POU2F3. This complex drives the development of tuft cells, a rare a rare chemosensory cells that coordinate immune and neural functions within mucosal epithelial tissues. This chain is POU class 2 homeobox associating factor 3, found in Homo sapiens (Human).